The primary structure comprises 402 residues: CCA-adding enzyme (402 aa).

ATP contacts are provided by glycine 32 and arginine 35. CTP-binding residues include glycine 32 and arginine 35. Mg(2+) is bound by residues aspartate 45 and aspartate 47. ATP is bound by residues arginine 119, aspartate 162, arginine 165, arginine 168, and arginine 171. Arginine 119, aspartate 162, arginine 165, arginine 168, and arginine 171 together coordinate CTP.

The protein belongs to the tRNA nucleotidyltransferase/poly(A) polymerase family. Bacterial CCA-adding enzyme type 3 subfamily. In terms of assembly, homodimer. Mg(2+) is required as a cofactor.

The enzyme catalyses a tRNA precursor + 2 CTP + ATP = a tRNA with a 3' CCA end + 3 diphosphate. It carries out the reaction a tRNA with a 3' CCA end + 2 CTP + ATP = a tRNA with a 3' CCACCA end + 3 diphosphate. Functionally, catalyzes the addition and repair of the essential 3'-terminal CCA sequence in tRNAs without using a nucleic acid template. Adds these three nucleotides in the order of C, C, and A to the tRNA nucleotide-73, using CTP and ATP as substrates and producing inorganic pyrophosphate. tRNA 3'-terminal CCA addition is required both for tRNA processing and repair. Also involved in tRNA surveillance by mediating tandem CCA addition to generate a CCACCA at the 3' terminus of unstable tRNAs. While stable tRNAs receive only 3'-terminal CCA, unstable tRNAs are marked with CCACCA and rapidly degraded. This Lactococcus lactis subsp. cremoris (strain SK11) protein is CCA-adding enzyme.